The sequence spans 268 residues: Tryptophan synthase alpha chain (268 aa).

Residues Glu49 and Asp60 each act as proton acceptor in the active site.

This sequence belongs to the TrpA family. In terms of assembly, tetramer of two alpha and two beta chains.

It carries out the reaction (1S,2R)-1-C-(indol-3-yl)glycerol 3-phosphate + L-serine = D-glyceraldehyde 3-phosphate + L-tryptophan + H2O. It participates in amino-acid biosynthesis; L-tryptophan biosynthesis; L-tryptophan from chorismate: step 5/5. In terms of biological role, the alpha subunit is responsible for the aldol cleavage of indoleglycerol phosphate to indole and glyceraldehyde 3-phosphate. The chain is Tryptophan synthase alpha chain from Escherichia coli (strain SE11).